Consider the following 371-residue polypeptide: MAAFPFEIEATDGKARTGVLKTPRGDIRTPAFMPVGTAATVKAMTVDQVKDTGADIILGNTYHLMLRPSAERVKRLGGLHKFMRWDKPILTDSGGFQVMSLSGISKLTEEAVTFSSHVDGSKHVLTPERSIEIQADLLGSDIVMQLDECVAWPAEEARARKGMELSARWAKRSKDAFGTRDTQVLFGIQQGSTFENLRRESSERLREIGFDGYAIGGLAVGEGHQAMCEVLDYAPGFLPEDRPRYLMGVGKPIDLVEAVARGVDMFDCVLPTRSGRHGQAWTWDGPINLKNAKYAEDETPLDPDSDCPASRDYSKAYLRHLFKAEEILGQVLLSWHNIAFFQALTAAMRAAIAEGRFEQFRRDFAARHLGG.

The Proton acceptor role is filled by aspartate 92. Substrate is bound by residues 92-96, aspartate 147, glutamine 190, and glycine 217; that span reads DSGGF. The tract at residues 248-254 is RNA binding; sequence GVGKPID. Catalysis depends on aspartate 267, which acts as the Nucleophile. The interval 272–276 is RNA binding; important for wobble base 34 recognition; that stretch reads TRSGR.

This sequence belongs to the queuine tRNA-ribosyltransferase family. Homodimer. Within each dimer, one monomer is responsible for RNA recognition and catalysis, while the other monomer binds to the replacement base PreQ1.

It carries out the reaction 7-aminomethyl-7-carbaguanine + guanosine(34) in tRNA = 7-aminomethyl-7-carbaguanosine(34) in tRNA + guanine. It functions in the pathway tRNA modification; tRNA-queuosine biosynthesis. Functionally, catalyzes the base-exchange of a guanine (G) residue with the queuine precursor 7-aminomethyl-7-deazaguanine (PreQ1) at position 34 (anticodon wobble position) in tRNAs with GU(N) anticodons (tRNA-Asp, -Asn, -His and -Tyr). Catalysis occurs through a double-displacement mechanism. The nucleophile active site attacks the C1' of nucleotide 34 to detach the guanine base from the RNA, forming a covalent enzyme-RNA intermediate. The proton acceptor active site deprotonates the incoming PreQ1, allowing a nucleophilic attack on the C1' of the ribose to form the product. After dissociation, two additional enzymatic reactions on the tRNA convert PreQ1 to queuine (Q), resulting in the hypermodified nucleoside queuosine (7-(((4,5-cis-dihydroxy-2-cyclopenten-1-yl)amino)methyl)-7-deazaguanosine). This Caulobacter vibrioides (strain ATCC 19089 / CIP 103742 / CB 15) (Caulobacter crescentus) protein is Queuine tRNA-ribosyltransferase.